A 353-amino-acid polypeptide reads, in one-letter code: Carbamoyl phosphate synthase arginine-specific small chain (353 aa).

A CPSase region spans residues 1–162 (MEGYLVLEDG…EISTFGDGNK (162 aa)). 3 residues coordinate L-glutamine: serine 44, glycine 210, and glycine 212. Residues 163 to 349 (HIALIDFGYK…LKNVIPARRE (187 aa)) form the Glutamine amidotransferase type-1 domain. Cysteine 237 (nucleophile) is an active-site residue. L-glutamine is bound by residues leucine 238, glutamine 241, asparagine 279, and tyrosine 282. Catalysis depends on residues histidine 322 and glutamate 324.

The protein belongs to the CarA family. In terms of assembly, composed of two chains; the small (or glutamine) chain promotes the hydrolysis of glutamine to ammonia, which is used by the large (or ammonia) chain to synthesize carbamoyl phosphate. Tetramer of heterodimers (alpha,beta)4.

The catalysed reaction is hydrogencarbonate + L-glutamine + 2 ATP + H2O = carbamoyl phosphate + L-glutamate + 2 ADP + phosphate + 2 H(+). The enzyme catalyses L-glutamine + H2O = L-glutamate + NH4(+). Its pathway is amino-acid biosynthesis; L-arginine biosynthesis; carbamoyl phosphate from bicarbonate: step 1/1. In terms of biological role, small subunit of the glutamine-dependent carbamoyl phosphate synthetase (CPSase). CPSase catalyzes the formation of carbamoyl phosphate from the ammonia moiety of glutamine, carbonate, and phosphate donated by ATP, constituting the first step of the biosynthetic pathway leading to arginine and/or urea. The small subunit (glutamine amidotransferase) binds and cleaves glutamine to supply the large subunit with the substrate ammonia. The chain is Carbamoyl phosphate synthase arginine-specific small chain from Bacillus subtilis (strain 168).